A 382-amino-acid chain; its full sequence is Lipid-A-disaccharide synthase (382 aa).

Belongs to the LpxB family.

It carries out the reaction 2-N,3-O-bis[(3R)-3-hydroxytetradecanoyl]-alpha-D-glucosaminyl 1-phosphate + UDP-2-N,3-O-bis[(3R)-3-hydroxytetradecanoyl]-alpha-D-glucosamine = lipid A disaccharide (E. coli) + UDP + H(+). It catalyses the reaction a lipid X + a UDP-2-N,3-O-bis[(3R)-3-hydroxyacyl]-alpha-D-glucosamine = a lipid A disaccharide + UDP + H(+). The protein operates within glycolipid biosynthesis; lipid IV(A) biosynthesis; lipid IV(A) from (3R)-3-hydroxytetradecanoyl-[acyl-carrier-protein] and UDP-N-acetyl-alpha-D-glucosamine: step 5/6. Its function is as follows. Condensation of UDP-2,3-diacylglucosamine and 2,3-diacylglucosamine-1-phosphate to form lipid A disaccharide, a precursor of lipid A, a phosphorylated glycolipid that anchors the lipopolysaccharide to the outer membrane of the cell. The protein is Lipid-A-disaccharide synthase of Escherichia coli (strain ATCC 8739 / DSM 1576 / NBRC 3972 / NCIMB 8545 / WDCM 00012 / Crooks).